The primary structure comprises 596 residues: Leucine-rich repeat and IQ domain-containing protein 4 (596 aa).

LRR repeat units follow at residues 22–44 (LPRL…LLRQ), 59–83 (LTDR…ILAL), 84–106 (KELE…IQQL), 108–129 (NTKV…LGAL), 130–152 (SSLE…VVSR), 153–176 (LRTL…ICKS), 177–200 (LHHL…IVNQ), 202–223 (KLRE…LCVL), 224–246 (YNLE…IGHL), 248–269 (RLQK…LSQC), 270–293 (SKLS…ELLT), 295–315 (LTEV…LCSW), 317–337 (SLHL…SFKR), 338–361 (LINL…ICAL), 362–384 (KNLE…ISLL), 385–407 (SNLK…IFSL), 410–433 (LEKL…IKRL), 434–457 (MNLK…GLMP), 459–479 (LEVL…ICRT), 480–502 (RNLR…LDHL), 504–525 (NLKV…VCNQ), and 527–549 (NEAI…TIQA). The IQ domain occupies 540 to 569 (RKMMATTIQAWWRGIMVRKGYGSYEELLKA). The span at 569-587 (ARKKGKSPPKDKKGKKAAK) shows a compositional bias: basic residues. The segment at 569-596 (ARKKGKSPPKDKKGKKAAKGKPEKGNKK) is disordered.

This chain is Leucine-rich repeat and IQ domain-containing protein 4 (Lrriq4), found in Mus musculus (Mouse).